A 119-amino-acid polypeptide reads, in one-letter code: Holo-[acyl-carrier-protein] synthase (119 aa).

Positions 8 and 58 each coordinate Mg(2+).

It belongs to the P-Pant transferase superfamily. AcpS family. Mg(2+) is required as a cofactor.

Its subcellular location is the cytoplasm. The enzyme catalyses apo-[ACP] + CoA = holo-[ACP] + adenosine 3',5'-bisphosphate + H(+). Its function is as follows. Transfers the 4'-phosphopantetheine moiety from coenzyme A to a Ser of acyl-carrier-protein. This chain is Holo-[acyl-carrier-protein] synthase, found in Streptococcus thermophilus (strain CNRZ 1066).